The following is a 61-amino-acid chain: MAKKSLVVKSERPAKFSTQTYTRCERCGRPHSVYRKFHLCRICLRELAHEGQIPGMKKASW.

Positions 24, 27, 40, and 43 each coordinate Zn(2+).

The protein belongs to the universal ribosomal protein uS14 family. Zinc-binding uS14 subfamily. In terms of assembly, part of the 30S ribosomal subunit. Contacts proteins S3 and S10. The cofactor is Zn(2+).

Functionally, binds 16S rRNA, required for the assembly of 30S particles and may also be responsible for determining the conformation of the 16S rRNA at the A site. This is Small ribosomal subunit protein uS14B from Pediococcus pentosaceus (strain ATCC 25745 / CCUG 21536 / LMG 10740 / 183-1w).